The sequence spans 1241 residues: Interphotoreceptor matrix proteoglycan 2 (1241 aa).

A signal peptide spans 1–28 (MIMFLPLGRISLGILILFLTGGNLVSVS). The Extracellular portion of the chain corresponds to 29–1104 (EEIQDRMHAV…CEEFVSEPFV (1076 aa)). Thr193 is a glycosylation site (O-linked (GalNAc...) threonine). The disordered stretch occupies residues 206–234 (AASERSAASPQESISNEIENVTEQPTPPA). The span at 211-229 (SAASPQESISNEIENVTEQ) shows a compositional bias: polar residues. Asn225 is a glycosylation site (N-linked (GlcNAc...) asparagine). Thr231 carries an O-linked (GalNAc...) threonine glycan. In terms of domain architecture, SEA 1 spans 235–349 (AEQIAEFSIQ…KPTAVYTISN (115 aa)). The hyaluronan-binding motif involved in chondroitin sulfate A-binding stretch occupies residues 255 to 263 (RDPSSALYR). N-linked (GlcNAc...) asparagine glycosylation is found at Asn297, Asn316, and Asn366. Thr429, Thr430, and Thr431 each carry an O-linked (GalNAc...) threonine glycan. Residues 431 to 443 (TISPFGFSSGPPS) are compositionally biased toward low complexity. 2 disordered regions span residues 431–456 (TISPFGFSSGPPSATGRELHSESTLG) and 500–520 (VAPEGRTSGSSILEDDNTEES). A glycan (O-linked (GalNAc...) threonine) is linked at Thr817. Residues Asn841, Asn945, and Asn959 are each glycosylated (N-linked (GlcNAc...) asparagine). One can recognise an SEA 2 domain in the interval 900–1013 (GALVVFFSLR…YSLDVESGDD (114 aa)). 2 consecutive EGF-like domains span residues 1013-1054 (DANP…LPCQ) and 1055-1096 (SVCD…QHCE). 6 cysteine pairs are disulfide-bonded: Cys1017/Cys1028, Cys1022/Cys1039, Cys1041/Cys1053, Cys1057/Cys1070, Cys1064/Cys1080, and Cys1082/Cys1095. The interval 1083-1091 (RVGSNWWYR) is hyaluronan-binding motif involved in chondroitin sulfate C-binding. A helical transmembrane segment spans residues 1105 to 1125 (IGITIASVVSLLLVASAVVFF). The Cytoplasmic segment spans residues 1126–1241 (LAKMLQAQNV…FVREHEMEEL (116 aa)). The segment at 1128-1136 (KMLQAQNVR) is hyaluronan-binding motif involved in chondroitin sulfate A- and C-binding. The tract at residues 1139-1145 (RQRPTNR) is hyaluronan-binding motif involved in chondroitin sulfate C-binding. A hyaluronan-binding motif involved in chondroitin sulfate A- and C-binding motif region spans residues 1210–1218 (KEEIQERMR).

As to expression, expressed in the pineal gland and the outer layer of the retina.

The protein localises to the photoreceptor outer segment membrane. Its subcellular location is the photoreceptor inner segment membrane. The protein resides in the secreted. It is found in the extracellular space. It localises to the extracellular matrix. The protein localises to the interphotoreceptor matrix. Its function is as follows. Chondroitin sulfate- and hyaluronan-binding proteoglycan involved in the organization of interphotoreceptor matrix; may participate in the maturation and maintenance of the light-sensitive photoreceptor outer segment. Binds heparin. This Rattus norvegicus (Rat) protein is Interphotoreceptor matrix proteoglycan 2 (Impg2).